A 185-amino-acid chain; its full sequence is Ribosome-recycling factor (185 aa).

This sequence belongs to the RRF family.

The protein resides in the cytoplasm. In terms of biological role, responsible for the release of ribosomes from messenger RNA at the termination of protein biosynthesis. May increase the efficiency of translation by recycling ribosomes from one round of translation to another. The sequence is that of Ribosome-recycling factor from Pseudarthrobacter chlorophenolicus (strain ATCC 700700 / DSM 12829 / CIP 107037 / JCM 12360 / KCTC 9906 / NCIMB 13794 / A6) (Arthrobacter chlorophenolicus).